Reading from the N-terminus, the 471-residue chain is uncharacterized protein (471 aa).

A run of 11 helical transmembrane segments spans residues Leu15–Leu35, Pro66–Val86, Ala89–Met109, Trp147–Gln167, Phe179–Ile199, Glu210–Met230, Ala237–Ala257, Val303–Ala323, Gly353–Phe373, Leu386–Gly406, and Ile410–Leu430.

This sequence belongs to the alanine or glycine:cation symporter (AGCS) (TC 2.A.25) family.

It localises to the cell membrane. This is an uncharacterized protein from Bacillus subtilis (strain 168).